Reading from the N-terminus, the 202-residue chain is Small ribosomal subunit protein uS4c (202 aa).

Residues 90 to 153 (MRLDNVIFRL…KSETIISKNI (64 aa)) form the S4 RNA-binding domain.

This sequence belongs to the universal ribosomal protein uS4 family. Part of the 30S ribosomal subunit. Contacts protein S5. The interaction surface between S4 and S5 is involved in control of translational fidelity.

The protein resides in the plastid. It is found in the chloroplast. Its function is as follows. One of the primary rRNA binding proteins, it binds directly to 16S rRNA where it nucleates assembly of the body of the 30S subunit. With S5 and S12 plays an important role in translational accuracy. The protein is Small ribosomal subunit protein uS4c (rps4) of Arbusculohypopterygium arbuscula (Moss).